The primary structure comprises 132 residues: Urease subunit beta (132 aa).

The protein belongs to the urease beta subunit family. In terms of assembly, heterotrimer of UreA (gamma), UreB (beta) and UreC (alpha) subunits. Three heterotrimers associate to form the active enzyme.

It localises to the cytoplasm. The catalysed reaction is urea + 2 H2O + H(+) = hydrogencarbonate + 2 NH4(+). It participates in nitrogen metabolism; urea degradation; CO(2) and NH(3) from urea (urease route): step 1/1. The sequence is that of Urease subunit beta from Natronomonas pharaonis (strain ATCC 35678 / DSM 2160 / CIP 103997 / JCM 8858 / NBRC 14720 / NCIMB 2260 / Gabara) (Halobacterium pharaonis).